The chain runs to 423 residues: Zinc finger protein Gfi-1 (423 aa).

The segment at 1-20 (MPRSFLVKSKKAHSYHQPRS) is SNAG domain. The disordered stretch occupies residues 1 to 76 (MPRSFLVKSK…DRASASPNSC (76 aa)). Phosphoserine occurs at positions 20 and 57. The span at 48 to 57 (SKMEPRERLS) shows a compositional bias: basic and acidic residues. The required for interaction with RELA stretch occupies residues 141 to 258 (RQCSALERSA…LLLGGGSYKC (118 aa)). 6 C2H2-type zinc fingers span residues 256–279 (YKCIKCSKVFSTPHGLEVHVRRSH), 285–307 (FACEMCGKTFGHAVSLEQHKAVH), 313–335 (FDCKICGKSFKRSSTLSTHLLIH), 341–363 (YPCQYCGKRFHQKSDMKKHTFIH), 369–391 (HKCQVCGKAFSQSSNLITHSRKH), and 397–420 (FGCDLCGKGFQRKVDLRRHRETQH).

As to quaternary structure, interacts (via the zinc-finger domain) with ARIH2; the interaction prevents GFI1 ubiquitination and proteasomal degradation. Forms a complex with EHMT2 and HDAC1 to promote 'Lys-9' dimethylation of H3 (H3K9Me2) and repress expression of target genes. Interacts directly with EHMT2. Interacts with RUNX1T1; the interaction represses HDAC-mediated transcriptional activity. Interacts (via the C-terminal zinc fingers) with ZBTB17; the interaction results in the recruitment of GFI1 to the CDKN1A/p21 and CDKNIB promoters and repression of transcription. Interacts with U2AF1L4. Component of RCOR-GFI-KDM1A-HDAC complexes. Interacts directly with RCOR1, KDM1A and HDAC2. Also interacts with HDAC1. Component of the GFI1-AJUBA-HDAC1 repressor complex. Interacts directly with AJUBA (via its LIM domains); the interaction results in the HDAC-dependent corepression of a subset of GFI1 target genes and, occurs independently of the SNAG domain. Interacts with SPI1; the interaction inhibits SPI1 transcriptional activity targeted at macrophage-specific genes, repressing macrophage differentiation of myeloid progenitor cells and promoting granulocyte commitment. Interacts with PIAS3; the interaction relieves the inhibitory effect of PIAS3 on STAT3-mediated transcriptional activity. Interacts with RELA; the interaction occurs on liposaccharide (LPS) stimulation and controls RELA DNA binding activity and regulates endotoxin-mediated TOLL-like receptor inflammatory response. Post-translationally, ubiquitinated.

The protein localises to the nucleus. Functionally, transcription repressor essential for hematopoiesis. Functions in a cell-context and development-specific manner. Binds to 5'-TAAATCAC[AT]GCA-3' in the promoter region of a large number of genes. Component of several complexes, including the EHMT2-GFI1-HDAC1, AJUBA-GFI1-HDAC1 and RCOR-GFI-KDM1A-HDAC complexes, that suppress, via histone deacetylase (HDAC) recruitment, a number of genes implicated in multilineage blood cell development. Regulates neutrophil differentiation, promotes proliferation of lymphoid cells, and is required for granulocyte development. Inhibits SPI1 transcriptional activity at macrophage-specific genes, repressing macrophage differentiation of myeloid progenitor cells and promoting granulocyte commitment. Mediates, together with U2AF1L4, the alternative splicing of CD45 and controls T-cell receptor signaling. Regulates the endotoxin-mediated Toll-like receptor (TLR) inflammatory response by antagonizing RELA. Cooperates with CBFA2T2 to regulate ITGB1-dependent neurite growth. Controls cell-cycle progression by repressing CDKNIA/p21 transcription in response to TGFB1 via recruitment of GFI1 by ZBTB17 to the CDKNIA/p21 and CDKNIB promoters. Required for the maintenance of inner ear hair cells. In addition to its role in transcription, acts as a substrate adapter for PRMT1 in the DNA damage response. Facilitates the recognition of TP53BP1 and MRE11 substrates by PRMT1, promoting their methylation and the DNA damage response. In Mus musculus (Mouse), this protein is Zinc finger protein Gfi-1 (Gfi1).